The primary structure comprises 214 residues: Large ribosomal subunit protein uL3 (214 aa).

Positions 131–155 (GAQRTSHGNSRSHRVPGSIGMAQDP) are disordered. N5-methylglutamine is present on Gln153.

It belongs to the universal ribosomal protein uL3 family. Part of the 50S ribosomal subunit. Forms a cluster with proteins L14 and L19. Methylated by PrmB.

In terms of biological role, one of the primary rRNA binding proteins, it binds directly near the 3'-end of the 23S rRNA, where it nucleates assembly of the 50S subunit. In Neisseria gonorrhoeae (strain ATCC 700825 / FA 1090), this protein is Large ribosomal subunit protein uL3.